The following is a 211-amino-acid chain: High mobility group protein B1-like 1 (211 aa).

N6-acetyllysine occurs at positions 3, 7, 8, 12, 28, 29, and 30. Residues 9–79 (PRGKMSSYAF…HYERQMKTYI (71 aa)) constitute a DNA-binding region (HMG box 1). The interval 71 to 96 (YERQMKTYIPPKGETKKKFKDPNAPK) is disordered. Positions 83-94 (GETKKKFKDPNA) are enriched in basic and acidic residues. Positions 95–163 (PKRPPSAFFL…KYEKDIAAYQ (69 aa)) form a DNA-binding region, HMG box 2. An N6-acetyllysine mark is found at lysine 127, lysine 128, lysine 172, lysine 173, lysine 177, lysine 180, lysine 182, lysine 183, lysine 184, and lysine 185. The tract at residues 161–211 (AYQAKGKPEAAKKGVVKAEKSKKKKEEEEDEEDEEDEEEEDEEDEEDDDDE) is disordered. A compositionally biased stretch (basic and acidic residues) spans 166-179 (GKPEAAKKGVVKAE). Residues 187 to 211 (EEEDEEDEEDEEEEDEEDEEDDDDE) are compositionally biased toward acidic residues.

It belongs to the HMGB family.

Its subcellular location is the nucleus. The protein resides in the chromosome. Functionally, binds preferentially single-stranded DNA and unwinds double-stranded DNA. This is High mobility group protein B1-like 1 (HMGB1P1) from Homo sapiens (Human).